We begin with the raw amino-acid sequence, 465 residues long: uncharacterized protein (465 aa).

Disordered regions lie at residues 1-55 (MNSS…SSHQ), 70-164 (DFSE…VEGQ), and 221-313 (TTDN…KQRV). Residues 40–50 (ENYKDNSDHSN) show a composition bias toward basic and acidic residues. Over residues 73-82 (ESFNDNQNLK) the composition is skewed to polar residues. Positions 83–134 (NFNTTDNNFNDDYNNDYDSNNDSNNDSNNDSNNDYDNESNNYFNNDSNNDSN) are enriched in low complexity. Residues 141–150 (ETTKHKLPIE) are compositionally biased toward basic and acidic residues. Over residues 221–235 (TTDNQSNTESSQENN) the composition is skewed to low complexity. Basic and acidic residues-rich tracts occupy residues 236–249 (VIKK…DKQP) and 259–275 (IVPK…KSIK). Positions 288–306 (IDQSNKLGKSYNTNNNNSK) are enriched in polar residues. Residues 390-423 (NKASIAELKKMRLEQRKREIEEKRRQVENKKPDS) adopt a coiled-coil conformation.

This is an uncharacterized protein from Acanthamoeba polyphaga mimivirus (APMV).